The primary structure comprises 61 residues: Tubulin alpha-4 chain (61 aa).

Gln11 is a binding site for GTP. A disordered region spans residues 35 to 61; that stretch reads QMPGDKTIGGGDAEFDEGEDGDEGDEY. Lys40 bears the N6-acetyllysine mark. A compositionally biased stretch (acidic residues) spans 47 to 61; that stretch reads AEFDEGEDGDEGDEY.

This sequence belongs to the tubulin family. As to quaternary structure, dimer of alpha and beta chains. A typical microtubule is a hollow water-filled tube with an outer diameter of 25 nm and an inner diameter of 15 nM. Alpha-beta heterodimers associate head-to-tail to form protofilaments running lengthwise along the microtubule wall with the beta-tubulin subunit facing the microtubule plus end conferring a structural polarity. Microtubules usually have 13 protofilaments but different protofilament numbers can be found in some organisms and specialized cells. Requires Mg(2+) as cofactor. Post-translationally, undergoes a tyrosination/detyrosination cycle, the cyclic removal and re-addition of a C-terminal tyrosine residue by the enzymes tubulin tyrosine carboxypeptidase (TTCP) and tubulin tyrosine ligase (TTL), respectively. In terms of processing, acetylation of alpha chains at Lys-40 stabilizes microtubules and affects affinity and processivity of microtubule motors. This modification has a role in multiple cellular functions, ranging from cell motility, cell cycle progression or cell differentiation to intracellular trafficking and signaling.

The protein resides in the cytoplasm. It localises to the cytoskeleton. The catalysed reaction is GTP + H2O = GDP + phosphate + H(+). Tubulin is the major constituent of microtubules, a cylinder consisting of laterally associated linear protofilaments composed of alpha- and beta-tubulin heterodimers. Microtubules grow by the addition of GTP-tubulin dimers to the microtubule end, where a stabilizing cap forms. Below the cap, tubulin dimers are in GDP-bound state, owing to GTPase activity of alpha-tubulin. This chain is Tubulin alpha-4 chain (TUBA4), found in Zea mays (Maize).